Consider the following 118-residue polypeptide: Small ribosomal subunit protein uS13 (118 aa).

A disordered region spans residues 94 to 118 (GLPLRGQRTRTNARTRKGPRKAIRK).

Belongs to the universal ribosomal protein uS13 family. Part of the 30S ribosomal subunit. Forms a loose heterodimer with protein S19. Forms two bridges to the 50S subunit in the 70S ribosome.

Its function is as follows. Located at the top of the head of the 30S subunit, it contacts several helices of the 16S rRNA. In the 70S ribosome it contacts the 23S rRNA (bridge B1a) and protein L5 of the 50S subunit (bridge B1b), connecting the 2 subunits; these bridges are implicated in subunit movement. Contacts the tRNAs in the A and P-sites. The protein is Small ribosomal subunit protein uS13 of Xanthomonas axonopodis pv. citri (strain 306).